A 321-amino-acid polypeptide reads, in one-letter code: Glucokinase (321 aa).

8 to 13 contacts ATP; the sequence is ADIGGT.

It belongs to the bacterial glucokinase family.

The protein resides in the cytoplasm. It carries out the reaction D-glucose + ATP = D-glucose 6-phosphate + ADP + H(+). The chain is Glucokinase from Photorhabdus laumondii subsp. laumondii (strain DSM 15139 / CIP 105565 / TT01) (Photorhabdus luminescens subsp. laumondii).